Consider the following 486-residue polypeptide: Protein DETOXIFICATION 27 (486 aa).

The tract at residues 1–25 (MRGGDGEEGSESRVALLKSPHTAEE) is disordered. Helical transmembrane passes span 41–61 (LWQIVGPAIFSRVTTYSMLVI), 74–94 (LAAISIVNNVTVGFNFGLLLG), 124–144 (IVLFFCCVLLLPTYIFTTPVL), 153–173 (IAELSGVVAIWVIPLHFAFTL), 189–209 (VTAYAAAVALVVHILVCWLFV), 216–236 (VVGTVATISISWWVNVLILLV), 269–289 (GVMLCLENWYYRILIIMTGNL), 299–319 (LSICMAINGWEMMIPLAFFAG), 349–369 (IIGLFFWVLIMLLHNQIAWIF), 384–404 (LLLAFTVLLNSVQPVLSGVAV), 407–427 (GWQSYVAYINLGCYYCIGVPL), and 439–461 (VMGIWGGMIFGGTAVQTMILSFI).

This sequence belongs to the multi antimicrobial extrusion (MATE) (TC 2.A.66.1) family.

It is found in the membrane. The chain is Protein DETOXIFICATION 27 from Arabidopsis thaliana (Mouse-ear cress).